Here is a 571-residue protein sequence, read N- to C-terminus: MSREAGSCRVGTGARARSRKPKKPHYIPRPWGKPYNYKCFQCPFTCLEKSHLYNHMKYSLCKDSLSLLLDSPDWACRRGSTTPRPHAPTPDRPGESDPGRQPQGARPTGAAPAPDLVVADIHSLHCGGGPKSRAKGSPGPPPPVARATRKGPGPSGLLPESWKPGMGGDPRGVGAGDMASAGPEGSVPCYPPPAPGEFPEAHSLHLSLLGVNYPLSPGLFSYLGPSLAAAAHVPFLASASPLLPPATAFPAVQPPQRPTPAPRLYYPLLLEHTLGLPAGKAALAKAPVSPRSPSGTPAPGLLKVPVPGLGPWPRVTPRDPGQEGELERAAQSDPRRRLSLGSRLELPKASPSLTRFCSRSSLPTGSSVMLWPEDGDPGGPETPGPEGPLPLQPRGPVPGSPEHVGEDLTRALGDYARVEQRLGQLGPAGGLAPRPLREQLGKIRLELLTIHQALEQAVRPPDAPLDLSVKRAPAKGPQALGEAWGRPELGPVLTGGTPEPPGMLGPAAPQPFSGHTTKCEADSSVPPPGLPLAAPDDPVIPGSGWGTCVATRSSQTPEAVCGLQSPQGAEV.

Disordered regions lie at residues 1-27 (MSRE…PHYI), 79-187 (GSTT…EGSV), 286-402 (APVS…GSPE), and 476-571 (GPQA…GAEV). The span at 16–26 (ARSRKPKKPHY) shows a compositional bias: basic residues. A compositionally biased stretch (gly residues) spans 165–175 (GMGGDPRGVGA). Basic and acidic residues predominate over residues 316–336 (TPRDPGQEGELERAAQSDPRR). Positions 351 to 367 (PSLTRFCSRSSLPTGSS) are enriched in polar residues. Residues 380–399 (PETPGPEGPLPLQPRGPVPG) are compositionally biased toward pro residues.

The polypeptide is Proline-rich protein 35 (PRR35) (Homo sapiens (Human)).